The following is a 1150-amino-acid chain: RNA polymerase-associated protein CTR9 (1150 aa).

TPR repeat units lie at residues 143–176 (VRAW…NPKN), 177–210 (VLPL…CRHT), 212–245 (ADLR…EPYN), 247–282 (SAMC…QTDH), 320–353 (AEAF…NNGE), 355–388 (TLAH…LPNN), 432–464 (YEAC…LVTN), 471–504 (PEML…LEEQ), 594–627 (PIVW…IFNN), 643–677 (FEQL…QPKN), 679–711 (YAAN…TSEF), 712–745 (YDVW…FRKE), and 748–781 (STLQ…QLDN). 2 coiled-coil regions span residues 848 to 916 (AEEA…NLRL) and 972 to 1028 (ERRE…AKQS). Positions 935-1150 (KRRGGGGRKR…KKKVIESDSD (216 aa)) are disordered. Basic residues predominate over residues 975–992 (ERRKKDKAAKKASRKKRE). Composition is skewed to basic and acidic residues over residues 993–1005 (RRDS…NRRD), 1013–1024 (EERDRKLQEKLS), 1060–1084 (DPRP…ETTT), and 1132–1150 (RDSD…SDSD).

As to quaternary structure, component of the PAF1 complex which consists of at least cdc-73, ctr-9, leo-1, pafo-1 and rtfo-1.

The protein localises to the nucleus. Functionally, component of the PAF1 complex which is a multifunctional complex involved in transcription initiation via genetic interactions with TATA-binding proteins, elongation and transcription-coupled histone modification. Ctr-9 is required for epidermal microtubule organization during morphogenesis. The sequence is that of RNA polymerase-associated protein CTR9 from Caenorhabditis elegans.